The chain runs to 370 residues: 3-isopropylmalate dehydrogenase (370 aa).

Residue Gly-77 to Glu-90 coordinates NAD(+). Arg-97, Arg-107, Arg-135, and Asp-226 together coordinate substrate. Mg(2+)-binding residues include Asp-226, Asp-250, and Asp-254. Residue Gly-290 to Asn-302 participates in NAD(+) binding.

This sequence belongs to the isocitrate and isopropylmalate dehydrogenases family. LeuB type 1 subfamily. Homodimer. Requires Mg(2+) as cofactor. The cofactor is Mn(2+).

The protein resides in the cytoplasm. It catalyses the reaction (2R,3S)-3-isopropylmalate + NAD(+) = 4-methyl-2-oxopentanoate + CO2 + NADH. It functions in the pathway amino-acid biosynthesis; L-leucine biosynthesis; L-leucine from 3-methyl-2-oxobutanoate: step 3/4. Catalyzes the oxidation of 3-carboxy-2-hydroxy-4-methylpentanoate (3-isopropylmalate) to 3-carboxy-4-methyl-2-oxopentanoate. The product decarboxylates to 4-methyl-2 oxopentanoate. The sequence is that of 3-isopropylmalate dehydrogenase from Rhodopseudomonas palustris (strain ATCC BAA-98 / CGA009).